The following is a 299-amino-acid chain: DNA-binding transcriptional activator HetR (299 aa).

Residue serine 152 is part of the active site.

Belongs to the peptidase S48 family. As to quaternary structure, homodimer; disulfide-linked.

Functionally, might be involved in temporal and/or spatial regulation of nitrogen fixation. Dimerization is required for DNA-binding. Has both a protease and a DNA-binding activity. This Leptolyngbya boryana (Plectonema boryanum) protein is DNA-binding transcriptional activator HetR.